The chain runs to 461 residues: Deoxyguanosinetriphosphate triphosphohydrolase-like protein (461 aa).

The interval 22–41 (ERFLPDPPREKDNRPPFRRD) is disordered. The span at 24-41 (FLPDPPREKDNRPPFRRD) shows a compositional bias: basic and acidic residues. Positions 72–285 (RLTHSLEVAQ…MELADDIAYG (214 aa)) constitute an HD domain.

It belongs to the dGTPase family. Type 2 subfamily.

In Haemophilus influenzae (strain PittGG), this protein is Deoxyguanosinetriphosphate triphosphohydrolase-like protein.